Consider the following 295-residue polypeptide: Tyrosine recombinase XerD (295 aa).

Positions 1–85 (METIIEEYLR…TIRSFHQFAI (85 aa)) constitute a Core-binding (CB) domain. The region spanning 106 to 289 (KLPDVLNVDE…SKSQIRKMYN (184 aa)) is the Tyr recombinase domain. Residues arginine 146, lysine 170, histidine 241, arginine 244, and histidine 267 contribute to the active site. Tyrosine 276 serves as the catalytic O-(3'-phospho-DNA)-tyrosine intermediate.

This sequence belongs to the 'phage' integrase family. XerD subfamily. As to quaternary structure, forms a cyclic heterotetrameric complex composed of two molecules of XerC and two molecules of XerD.

The protein resides in the cytoplasm. In terms of biological role, site-specific tyrosine recombinase, which acts by catalyzing the cutting and rejoining of the recombining DNA molecules. The XerC-XerD complex is essential to convert dimers of the bacterial chromosome into monomers to permit their segregation at cell division. It also contributes to the segregational stability of plasmids. This Staphylococcus aureus (strain COL) protein is Tyrosine recombinase XerD.